We begin with the raw amino-acid sequence, 388 residues long: MADGWMARIDDALAQRRREQTYRERWALSGGNDRLIRDGDRQYLNFSSNDYLGLARHPEVIAAWQQGAAQAGVGAGGSGHVTGYGLHHQRLEQRLADWLGFPRALLFTSGFAANQALVGALTASGDHILADRLSHASLLEAAMHSPATLRRFAHNDADALQRLLRRDCAGNRLVITEGVFSMDGDRAPLPALAEITRAAGCWLMVDDAHGIGVVGEEGRGCAWAPAGRPDLLVVTFGKAVGVSGAAVLCATPVAEYLLQFARHLIYSTAPPPAQIAAIDAALTVVRRGDALRQRLWDNIVRFRRGAAALGFALAPSDTAIQPLVIGDNLRTLQLAQRLRERGVWLTAIRPPTVPPGSARLRITLTSAHLADDIDTLLEALSDAQLQNA.

Arg23 serves as a coordination point for substrate. 110–111 (GF) contributes to the pyridoxal 5'-phosphate binding site. Position 135 (His135) interacts with substrate. Positions 181, 209, and 235 each coordinate pyridoxal 5'-phosphate. Lys238 is modified (N6-(pyridoxal phosphate)lysine). Position 352 (Thr352) interacts with substrate.

It belongs to the class-II pyridoxal-phosphate-dependent aminotransferase family. BioF subfamily. Homodimer. Pyridoxal 5'-phosphate serves as cofactor.

The enzyme catalyses 6-carboxyhexanoyl-[ACP] + L-alanine + H(+) = (8S)-8-amino-7-oxononanoate + holo-[ACP] + CO2. Its pathway is cofactor biosynthesis; biotin biosynthesis. Its function is as follows. Catalyzes the decarboxylative condensation of pimeloyl-[acyl-carrier protein] and L-alanine to produce 8-amino-7-oxononanoate (AON), [acyl-carrier protein], and carbon dioxide. The protein is 8-amino-7-oxononanoate synthase of Sodalis glossinidius (strain morsitans).